A 738-amino-acid chain; its full sequence is MPYLGSEDVVKELKKALCNPHIQADRLRYRNVIQRVIRHMTQGLDMSDVFMEMVKASATVDIVQKKLVYLYMGTYAPLKPDLALLAINTLCKDCSDPNPMVRGLALRSMCSLRMPGVQEYIQQPVVNGLRDKASYVRRVAVLGCAKMHNLHGDSEVDGALVNELYSLLRDQDPIVVVNCLRSLEEILKQEGGVVINKPIAHHLLNRMSKLDQWGQAEVLNFLLRYQPRSEEELFDILNLLDSYLKSSSTGVVMGATKLFLILAKKFPHVQTDVLVRVKGPLLAACSSESRELCFAALCHVRQVLHSLPGHFSSHYKKFFCSYSEPHYIKLQKVEVLCELVNDENVQQVLEELRGYCTDVAADFAQAAIFAIGSIAKTYTDQCVQILTELLGLRQEHITTVVVQTFRDLVWLCPQCTEAVCQALPGCEENIQDSEGKQALIWLLGVHGEKIPNAPYVLEDFVDNVKSETFPAVKMELLTALMRLVLSRPAECQDMLGRLLHYCIEEEKDMAVRDRGLFYYRLLLVGIDKVKQILCSPKSDPSLGLLEDQPERPVNSWASDFNTLAPVYGRAHWATISKCQQVERHRLELPHNASFATSGHLISEENKEGAQEPDSDTLMLVPNLQLTAEYFEKTWLSLRVSYQQVFPWQGEVQPDTLQMALKVVNIQTIAMSRAGAQPWKAYLSAQDDTGGLFLAELLLKPENSEMQISVKQSKARTESLHGFVSVLETVIGTVGDIKS.

The tract at residues 534-600 (CSPKSDPSLG…NASFATSGHL (67 aa)) is hinge. The ear; mediates interaction with TEPSIN stretch occupies residues 601–738 (ISEENKEGAQ…VIGTVGDIKS (138 aa)).

Belongs to the adaptor complexes large subunit family. As to quaternary structure, adaptor protein complex 4 (AP-4) is a heterotetramer composed of two large adaptins (epsilon-type subunit AP4E1 and beta-type subunit AP4B1), a medium adaptin (mu-type subunit AP4M1) and a small adaptin (sigma-type AP4S1). Interacts with TEPSIN; this interaction requires the presence of a functional AP-4 complex. Interacts with GRIA2; probably indirect it mediates the somatodendritic localization of GRIA2 in neurons.

It localises to the golgi apparatus. The protein localises to the trans-Golgi network membrane. In terms of biological role, component of the adaptor protein complex 4 (AP-4). Adaptor protein complexes are vesicle coat components involved both in vesicle formation and cargo selection. They control the vesicular transport of proteins in different trafficking pathways. AP-4 forms a non clathrin-associated coat on vesicles departing the trans-Golgi network (TGN) and may be involved in the targeting of proteins from the trans-Golgi network (TGN) to the endosomal-lysosomal system. It is also involved in protein sorting to the basolateral membrane in epithelial cells and the proper asymmetric localization of somatodendritic proteins in neurons. AP-4 is involved in the recognition and binding of tyrosine-based sorting signals found in the cytoplasmic part of cargos, but may also recognize other types of sorting signal. The chain is AP-4 complex subunit beta-1 from Mus musculus (Mouse).